Reading from the N-terminus, the 276-residue chain is Large ribosomal subunit protein uL2 (276 aa).

Disordered regions lie at residues 1-60 and 226-276; these read MSIK…RHKR and NAVD…KRNQ. Residues 20–31 show a composition bias toward basic and acidic residues; sequence SKEEITREEPEK. Composition is skewed to basic residues over residues 50–60 and 258–276; these read STRRQGGRHKR and KTRRKAKKSDKYIVKKRNQ.

Belongs to the universal ribosomal protein uL2 family. In terms of assembly, part of the 50S ribosomal subunit. Forms a bridge to the 30S subunit in the 70S ribosome.

Functionally, one of the primary rRNA binding proteins. Required for association of the 30S and 50S subunits to form the 70S ribosome, for tRNA binding and peptide bond formation. It has been suggested to have peptidyltransferase activity; this is somewhat controversial. Makes several contacts with the 16S rRNA in the 70S ribosome. This chain is Large ribosomal subunit protein uL2, found in Natranaerobius thermophilus (strain ATCC BAA-1301 / DSM 18059 / JW/NM-WN-LF).